Reading from the N-terminus, the 181-residue chain is Trafficking protein particle complex subunit 3-like protein (181 aa).

C68 is lipidated: S-palmitoyl cysteine.

Belongs to the TRAPP small subunits family. BET3 subfamily. In terms of assembly, homodimer. Component of the multisubunit TRAPP (transport protein particle) complex, which includes at least TRAPPC2, TRAPPC2L, TRAPPC3, TRAPPC3L, TRAPPC4, TRAPPC5, TRAPPC8, TRAPPC9, TRAPPC10, TRAPPC11 and TRAPPC12.

It is found in the golgi apparatus. It localises to the cis-Golgi network. Its subcellular location is the endoplasmic reticulum. Functionally, may play a role in vesicular transport from endoplasmic reticulum to Golgi. This Mus musculus (Mouse) protein is Trafficking protein particle complex subunit 3-like protein (Trappc3l).